We begin with the raw amino-acid sequence, 208 residues long: Uracil phosphoribosyltransferase (208 aa).

Residues Arg78, Arg103, and 130-138 (DPMLATGGS) contribute to the 5-phospho-alpha-D-ribose 1-diphosphate site. Uracil is bound by residues Ile193 and 198-200 (GDA). Asp199 lines the 5-phospho-alpha-D-ribose 1-diphosphate pocket.

Belongs to the UPRTase family. Mg(2+) serves as cofactor.

The catalysed reaction is UMP + diphosphate = 5-phospho-alpha-D-ribose 1-diphosphate + uracil. It participates in pyrimidine metabolism; UMP biosynthesis via salvage pathway; UMP from uracil: step 1/1. Allosterically activated by GTP. In terms of biological role, catalyzes the conversion of uracil and 5-phospho-alpha-D-ribose 1-diphosphate (PRPP) to UMP and diphosphate. This is Uracil phosphoribosyltransferase from Wolinella succinogenes (strain ATCC 29543 / DSM 1740 / CCUG 13145 / JCM 31913 / LMG 7466 / NCTC 11488 / FDC 602W) (Vibrio succinogenes).